We begin with the raw amino-acid sequence, 562 residues long: MSDNNRSRHITEGVARAPNRAMYYALGYTEADFQNPMIGVANGHSTITPCNSGLQRLADAAIEAIRVSRANPQVFGTPTISDGMSMGTEGMKYSLVSREVIADCIETAAQGQWMDGVVVIGGCDKNMPGGMMALARMNVPGIYVYGGTIKPGHYKGKDLTIVSVFEAVGEYTMGRMDETDFKAIEQCAIPGSGSYGGMYTANTMSSAFEAMGMSLPYSSTMANEDQEKVASAAESARVLVEAVRRQLRPRDIITLASIENAVAVIMATGGSTNAVLHFLAIAHAAEVPWNIDDFERIRKRVPVICDLKPSGRYVATDLHRAGGIPQVMKILLNAGLLHGDCITITGKTVAETLANVPDAPPPGQDVIMPIERALYPQGHLAILKGNLSPEGCVAKITGLKNPVITGPARVFDSEDDAMAAIMDRRIRDGDVVVIRYEGPKGGPGMREMLAPTSALVGQGLGETVGLITDGRFSGGTWGMVVGHVAPEEFVGGPIALIREGDSVTIDAHQLLLLLLNISDEEMAARRKAWAQPKPRYVRGVLAKFGKLACTASRGAVTDAFEE.

A [2Fe-2S] cluster-binding site is contributed by C50. D82 is a binding site for Mg(2+). C123 contributes to the [2Fe-2S] cluster binding site. Mg(2+) is bound by residues D124, K125, and E447. An N6-carboxylysine modification is found at K125. S473 acts as the Proton acceptor in catalysis.

Belongs to the IlvD/Edd family. As to quaternary structure, homodimer. It depends on [2Fe-2S] cluster as a cofactor. Mg(2+) is required as a cofactor.

It catalyses the reaction (2R)-2,3-dihydroxy-3-methylbutanoate = 3-methyl-2-oxobutanoate + H2O. The enzyme catalyses (2R,3R)-2,3-dihydroxy-3-methylpentanoate = (S)-3-methyl-2-oxopentanoate + H2O. The protein operates within amino-acid biosynthesis; L-isoleucine biosynthesis; L-isoleucine from 2-oxobutanoate: step 3/4. Its pathway is amino-acid biosynthesis; L-valine biosynthesis; L-valine from pyruvate: step 3/4. Functions in the biosynthesis of branched-chain amino acids. Catalyzes the dehydration of (2R,3R)-2,3-dihydroxy-3-methylpentanoate (2,3-dihydroxy-3-methylvalerate) into 2-oxo-3-methylpentanoate (2-oxo-3-methylvalerate) and of (2R)-2,3-dihydroxy-3-methylbutanoate (2,3-dihydroxyisovalerate) into 2-oxo-3-methylbutanoate (2-oxoisovalerate), the penultimate precursor to L-isoleucine and L-valine, respectively. In Bordetella pertussis (strain Tohama I / ATCC BAA-589 / NCTC 13251), this protein is Dihydroxy-acid dehydratase 2.